The following is a 200-amino-acid chain: Imidazoleglycerol-phosphate dehydratase (200 aa).

Substrate contacts are provided by residues Glu-13, 39–47 (HMLTLLTFH), 68–72 (HHLIE), Arg-94, and Arg-116. His-39, His-68, His-69, and Glu-72 together coordinate Mn(2+). Glu-141, His-165, His-166, and Glu-169 together coordinate Mn(2+). Residues 165–173 (HHIIEGMFK) and 195–197 (SSK) each bind substrate.

It belongs to the imidazoleglycerol-phosphate dehydratase family. The cofactor is Mn(2+).

It is found in the cytoplasm. It carries out the reaction D-erythro-1-(imidazol-4-yl)glycerol 3-phosphate = 3-(imidazol-4-yl)-2-oxopropyl phosphate + H2O. Its pathway is amino-acid biosynthesis; L-histidine biosynthesis; L-histidine from 5-phospho-alpha-D-ribose 1-diphosphate: step 6/9. The protein is Imidazoleglycerol-phosphate dehydratase (hisB) of Lactococcus lactis subsp. lactis (strain IL1403) (Streptococcus lactis).